Reading from the N-terminus, the 135-residue chain is uncharacterized protein (135 aa).

Helical transmembrane passes span 20–40 (IFSF…NTKL) and 47–67 (IAYF…IHGT).

It belongs to the plectrovirus ORF5 family.

It localises to the host membrane. This is an uncharacterized protein from Spiroplasma virus SpV1-C74 (SpV1).